The primary structure comprises 231 residues: Ribonuclease 3 (231 aa).

The region spanning 5–134 (QEKLKNDYGL…FLGALFIDQG (130 aa)) is the RNase III domain. A Mg(2+)-binding site is contributed by Glu47. Residue Asp51 is part of the active site. Mg(2+)-binding residues include Asn120 and Glu123. Residue Glu123 is part of the active site. In terms of domain architecture, DRBM spans 160–229 (DYKTELQEVL…AENAIKGQNH (70 aa)).

The protein belongs to the ribonuclease III family. As to quaternary structure, homodimer. It depends on Mg(2+) as a cofactor.

The protein resides in the cytoplasm. It carries out the reaction Endonucleolytic cleavage to 5'-phosphomonoester.. Functionally, digests double-stranded RNA. Involved in the processing of primary rRNA transcript to yield the immediate precursors to the large and small rRNAs (23S and 16S). Processes some mRNAs, and tRNAs when they are encoded in the rRNA operon. Processes pre-crRNA and tracrRNA of type II CRISPR loci if present in the organism. This is Ribonuclease 3 from Lactococcus lactis subsp. cremoris (strain SK11).